Here is a 341-residue protein sequence, read N- to C-terminus: Cell division protein ZipA (341 aa).

Over 1–6 the chain is Periplasmic; the sequence is MENLQL. A helical transmembrane segment spans residues 7–27; sequence VLFVLGAIAIVAVLVHGFWSI. At 28–341 the chain is on the cytoplasmic side; it reads RKQQPKSLKE…YLQRIRTQNS (314 aa). Disordered regions lie at residues 35–134 and 157–201; these read LKES…PVLS and QSSL…PEPE. Over residues 90 to 100 the composition is skewed to polar residues; that stretch reads TLTSEGQMDSS. Over residues 175-190 the composition is skewed to low complexity; sequence SIEVPEPVSEPVLESV. The segment covering 192–201 has biased composition (pro residues); the sequence is EPEPVAPEPE.

This sequence belongs to the ZipA family. Interacts with FtsZ via their C-terminal domains.

Its subcellular location is the cell inner membrane. Its function is as follows. Essential cell division protein that stabilizes the FtsZ protofilaments by cross-linking them and that serves as a cytoplasmic membrane anchor for the Z ring. Also required for the recruitment to the septal ring of downstream cell division proteins. The chain is Cell division protein ZipA from Shewanella sediminis (strain HAW-EB3).